Here is a 712-residue protein sequence, read N- to C-terminus: Transferrin-binding protein B (712 aa).

Residues 1–20 (MNNPLVNQAAMVLPVFLLSA) form the signal peptide. Cys-21 carries N-palmitoyl cysteine lipidation. A lipid anchor (S-diacylglycerol cysteine) is attached at Cys-21. Residues 59–196 (GGYGFAMRLK…YHGKEPSRQL (138 aa)) are N-terminal handle domain. Disordered regions lie at residues 78-104 (EDEVKLDESDWEATGLPDEPKELPKRQ), 123-144 (PYLKPSNHQNGNTGNGINQPKN), 223-256 (IIQPSKSQGDRYSGFSGDDGEEYSNKNKSTLTDG), 309-338 (NGKATATDKPQQNSETKEHPFVSDSSSLSG), 364-398 (SAKTKDKPANGNTAAASGGTDAAASNGAAGTSSEN), 442-495 (ASES…GDTN), and 689-712 (NATNASGNSSATVVFGAKRQQPVR). Positions 95–104 (DEPKELPKRQ) are enriched in basic and acidic residues. Positions 128-144 (SNHQNGNTGNGINQPKN) are enriched in polar residues. Positions 197–367 (PASGKITYKG…KVAVVGSAKT (171 aa)) are N-terminal beta barrel domain. Low complexity-rich tracts occupy residues 372-398 (ANGNTAAASGGTDAAASNGAAGTSSEN) and 446-459 (GNNQANQGTNGGTA). The tract at residues 389 to 555 (NGAAGTSSEN…SMFLQGERTD (167 aa)) is C-terminal handle domain. A compositionally biased stretch (basic and acidic residues) spans 462–475 (RKFDHTPESDKKDA). Composition is skewed to polar residues over residues 477 to 495 (AGTQTNGAQTASNTAGDTN) and 689 to 700 (NATNASGNSSAT). The C-terminal beta barrel domain stretch occupies residues 556 to 712 (EKEIPSEQNI…FGAKRQQPVR (157 aa)).

The protein belongs to the TbpB family. Isotype II subfamily. Binds only human holo-transferrin (TF), via the TF C-terminus. Forms a large complex with TF and TbpA. Interacts via its C-terminal domain with Slam1.

The protein localises to the cell outer membrane. It localises to the cell surface. Neisseria acquires iron by extracting it from serum transferrin (TF) in its human host. Acts as a TF receptor and is required for TF utilization. Involved in the initial capture of TF. Helps select only those TF molecules that can be used as an iron source and concentrates them on the cell surface, maintaining the iron-loaded status of the TF C-terminal lobe until its delivery to TbpA. In Neisseria meningitidis serogroup B (strain ATCC BAA-335 / MC58), this protein is Transferrin-binding protein B.